We begin with the raw amino-acid sequence, 572 residues long: Far upstream element-binding protein 3 (572 aa).

At Ala-2 the chain carries N-acetylalanine. Residues Lys-15 and Lys-57 each participate in a glycyl lysine isopeptide (Lys-Gly) (interchain with G-Cter in SUMO2) cross-link. Thr-76 bears the Phosphothreonine mark. KH domains lie at 77–141 (VITE…KRLL), 162–228 (STIQ…REMV), 253–317 (GGSI…AHII), and 354–421 (VQEI…RQLI). Phosphoserine is present on Ser-296. Residues 426-521 (GGTNLGAPGA…SQPNYSKAWE (96 aa)) are disordered. Positions 496 to 514 (QQPTQQVPSQQSQPQSSQP) are enriched in low complexity. Ser-539 and Ser-569 each carry phosphoserine.

Detected in a number of cell lines.

It is found in the nucleus. Functionally, may interact with single-stranded DNA from the far-upstream element (FUSE). May activate gene expression. The sequence is that of Far upstream element-binding protein 3 (FUBP3) from Homo sapiens (Human).